Here is an 83-residue protein sequence, read N- to C-terminus: Aminoacyl carrier protein (83 aa).

The Carrier domain occupies 1-80 (MNATIREILA…DTVKLILDGK (80 aa)). Ser35 is modified (O-(pantetheine 4'-phosphoryl)serine).

Post-translationally, 4'-phosphopantetheine is transferred from CoA to a specific serine of the apo-form of this carrier protein.

In terms of biological role, aminoacyl carrier protein. Can be charged with L-alanine, L-glycine or L-serine, via the formation of a thioester bond between the amino acid and the 4'-phosphopantetheinyl prosthetic group, catalyzed by the Atu2573 ligase. This Agrobacterium fabrum (strain C58 / ATCC 33970) (Agrobacterium tumefaciens (strain C58)) protein is Aminoacyl carrier protein.